The primary structure comprises 125 residues: Small ribosomal subunit protein uS13 (125 aa).

The protein belongs to the universal ribosomal protein uS13 family. Part of the 30S ribosomal subunit. Forms a loose heterodimer with protein S19. Forms two bridges to the 50S subunit in the 70S ribosome.

Its function is as follows. Located at the top of the head of the 30S subunit, it contacts several helices of the 16S rRNA. In the 70S ribosome it contacts the 23S rRNA (bridge B1a) and protein L5 of the 50S subunit (bridge B1b), connecting the 2 subunits; these bridges are implicated in subunit movement. Contacts the tRNAs in the A and P-sites. The protein is Small ribosomal subunit protein uS13 of Rickettsia rickettsii (strain Iowa).